The following is a 396-amino-acid chain: Elongation factor Tu (396 aa).

Residues 10 to 206 (KPHVNVGTIG…TLDEYIPEPE (197 aa)) enclose the tr-type G domain. Positions 19-26 (GHVDHGKT) are G1. 19 to 26 (GHVDHGKT) serves as a coordination point for GTP. Thr-26 is a binding site for Mg(2+). Residues 60–64 (GITIA) form a G2 region. The tract at residues 81–84 (DCPG) is G3. GTP contacts are provided by residues 81-85 (DCPGH) and 136-139 (NKAD). The segment at 136-139 (NKAD) is G4. A G5 region spans residues 174-176 (SAL).

It belongs to the TRAFAC class translation factor GTPase superfamily. Classic translation factor GTPase family. EF-Tu/EF-1A subfamily. In terms of assembly, monomer.

It is found in the cytoplasm. The enzyme catalyses GTP + H2O = GDP + phosphate + H(+). GTP hydrolase that promotes the GTP-dependent binding of aminoacyl-tRNA to the A-site of ribosomes during protein biosynthesis. The chain is Elongation factor Tu from Alcanivorax borkumensis (strain ATCC 700651 / DSM 11573 / NCIMB 13689 / SK2).